The chain runs to 215 residues: Ribose-5-phosphate isomerase A (215 aa).

Substrate-binding positions include 26–29 (TGST), 79–82 (DGAD), and 92–95 (KGGG). Glu101 serves as the catalytic Proton acceptor. Residue Lys119 participates in substrate binding.

Belongs to the ribose 5-phosphate isomerase family. In terms of assembly, homodimer.

The catalysed reaction is aldehydo-D-ribose 5-phosphate = D-ribulose 5-phosphate. Its pathway is carbohydrate degradation; pentose phosphate pathway; D-ribose 5-phosphate from D-ribulose 5-phosphate (non-oxidative stage): step 1/1. Its function is as follows. Catalyzes the reversible conversion of ribose-5-phosphate to ribulose 5-phosphate. This chain is Ribose-5-phosphate isomerase A, found in Xanthomonas axonopodis pv. citri (strain 306).